Here is a 115-residue protein sequence, read N- to C-terminus: uncharacterized protein (115 aa).

Helical transmembrane passes span 11–31 (FLYL…LVWN) and 85–105 (GYII…YALI).

It to M.thermoautotrophicum MTH1706.

The protein resides in the cell membrane. This is an uncharacterized protein from Methanocaldococcus jannaschii (strain ATCC 43067 / DSM 2661 / JAL-1 / JCM 10045 / NBRC 100440) (Methanococcus jannaschii).